We begin with the raw amino-acid sequence, 510 residues long: ATP synthase subunit alpha (510 aa).

Gly169–Ser176 contributes to the ATP binding site.

It belongs to the ATPase alpha/beta chains family. As to quaternary structure, F-type ATPases have 2 components, CF(1) - the catalytic core - and CF(0) - the membrane proton channel. CF(1) has five subunits: alpha(3), beta(3), gamma(1), delta(1), epsilon(1). CF(0) has three main subunits: a(1), b(2) and c(9-12). The alpha and beta chains form an alternating ring which encloses part of the gamma chain. CF(1) is attached to CF(0) by a central stalk formed by the gamma and epsilon chains, while a peripheral stalk is formed by the delta and b chains.

It localises to the cell membrane. It catalyses the reaction ATP + H2O + 4 H(+)(in) = ADP + phosphate + 5 H(+)(out). Produces ATP from ADP in the presence of a proton gradient across the membrane. The alpha chain is a regulatory subunit. This is ATP synthase subunit alpha from Wigglesworthia glossinidia brevipalpis.